The sequence spans 54 residues: Lectin alpha chain (54 aa).

It belongs to the leguminous lectin family. Tetramer of two alpha and two beta chains.

The sequence is that of Lectin alpha chain from Lathyrus odoratus (Sweet pea).